The chain runs to 241 residues: Ribonuclease PH (241 aa).

Phosphate contacts are provided by residues Arg87 and 125-127; that span reads GTR.

This sequence belongs to the RNase PH family. Homohexameric ring arranged as a trimer of dimers.

The catalysed reaction is tRNA(n+1) + phosphate = tRNA(n) + a ribonucleoside 5'-diphosphate. In terms of biological role, phosphorolytic 3'-5' exoribonuclease that plays an important role in tRNA 3'-end maturation. Removes nucleotide residues following the 3'-CCA terminus of tRNAs; can also add nucleotides to the ends of RNA molecules by using nucleoside diphosphates as substrates, but this may not be physiologically important. Probably plays a role in initiation of 16S rRNA degradation (leading to ribosome degradation) during starvation. The chain is Ribonuclease PH from Nitrosomonas europaea (strain ATCC 19718 / CIP 103999 / KCTC 2705 / NBRC 14298).